The chain runs to 251 residues: Flap endonuclease Xni (251 aa).

Aspartate 104 serves as a coordination point for Mg(2+). The 5'-3' exonuclease domain occupies valine 160–leucine 249. K(+) contacts are provided by leucine 171, alanine 172, proline 180, valine 182, and isoleucine 185. Positions glycine 184 to serine 189 are interaction with DNA.

This sequence belongs to the Xni family. It depends on Mg(2+) as a cofactor. Requires K(+) as cofactor.

Has flap endonuclease activity. During DNA replication, flap endonucleases cleave the 5'-overhanging flap structure that is generated by displacement synthesis when DNA polymerase encounters the 5'-end of a downstream Okazaki fragment. This chain is Flap endonuclease Xni, found in Shigella flexneri serotype 5b (strain 8401).